The sequence spans 357 residues: UDP-N-acetylglucosamine--N-acetylmuramyl-(pentapeptide) pyrophosphoryl-undecaprenol N-acetylglucosamine transferase (357 aa).

UDP-N-acetyl-alpha-D-glucosamine is bound by residues 15 to 17, N124, R165, S194, and Q288; that span reads TGG.

Belongs to the glycosyltransferase 28 family. MurG subfamily.

It localises to the cell inner membrane. It catalyses the reaction di-trans,octa-cis-undecaprenyl diphospho-N-acetyl-alpha-D-muramoyl-L-alanyl-D-glutamyl-meso-2,6-diaminopimeloyl-D-alanyl-D-alanine + UDP-N-acetyl-alpha-D-glucosamine = di-trans,octa-cis-undecaprenyl diphospho-[N-acetyl-alpha-D-glucosaminyl-(1-&gt;4)]-N-acetyl-alpha-D-muramoyl-L-alanyl-D-glutamyl-meso-2,6-diaminopimeloyl-D-alanyl-D-alanine + UDP + H(+). Its pathway is cell wall biogenesis; peptidoglycan biosynthesis. Functionally, cell wall formation. Catalyzes the transfer of a GlcNAc subunit on undecaprenyl-pyrophosphoryl-MurNAc-pentapeptide (lipid intermediate I) to form undecaprenyl-pyrophosphoryl-MurNAc-(pentapeptide)GlcNAc (lipid intermediate II). This Nostoc sp. (strain PCC 7120 / SAG 25.82 / UTEX 2576) protein is UDP-N-acetylglucosamine--N-acetylmuramyl-(pentapeptide) pyrophosphoryl-undecaprenol N-acetylglucosamine transferase.